The primary structure comprises 104 residues: Chemokine-like protein MC148 (104 aa).

As to quaternary structure, interacts with host CXCL12.

Functionally, plays a role in antagonizing the chemotaxis of multiple leukocyte subsets induced by CC and CXC chemokines. Displaces the interaction between CXCL12 and CXCR4 and thereby inactivates the antiviral activity of host CXCL12. The polypeptide is Chemokine-like protein MC148 (MC148) (Homo sapiens (Human)).